Consider the following 400-residue polypeptide: Putative lysosomal acid lipase/cholesteryl ester hydrolase (400 aa).

A signal peptide spans 1–17 (MWRLIIIAILFQGLVNS). Residues Asn34, Asn129, and Asn159 are each glycosylated (N-linked (GlcNAc...) asparagine). The 301-residue stretch at 78–378 (PAVFLQHGLL…EWEHLDFIWG (301 aa)) folds into the AB hydrolase-1 domain. Catalysis depends on Ser172, which acts as the Charge relay system. Asn271 carries N-linked (GlcNAc...) asparagine glycosylation. His372 serves as the catalytic Charge relay system.

It belongs to the AB hydrolase superfamily. Lipase family. In terms of tissue distribution, expressed by the venom gland.

The protein localises to the secreted. The catalysed reaction is a sterol ester + H2O = a sterol + a fatty acid + H(+). Its function is as follows. In physiological conditions, is crucial for intracellular hydrolysis of cholesteryl esters and triglycerides that have been internalized via receptor-mediated endocytosis of lipoprotein particles. In venom, the biological contribution is unknown. This is Putative lysosomal acid lipase/cholesteryl ester hydrolase from Crotalus adamanteus (Eastern diamondback rattlesnake).